Consider the following 467-residue polypeptide: Serine decarboxylase 2 (467 aa).

Position 178 (histidine 178) interacts with substrate. Residue lysine 290 is modified to N6-(pyridoxal phosphate)lysine.

Belongs to the group II decarboxylase family. Pyridoxal 5'-phosphate is required as a cofactor.

The enzyme catalyses L-serine + H(+) = ethanolamine + CO2. In terms of biological role, catalyzes the biosynthesis of ethanolamine from serine. Decarboxylation of free serine is the major source of ethanolamine production in plants and ethanolamine metabolism is crucial for the synthesis of choline, phosphatidylethanolamine (PE) and phosphatidylcholine (PC), and thus for plant growth. The polypeptide is Serine decarboxylase 2 (Oryza sativa subsp. japonica (Rice)).